The following is a 332-amino-acid chain: L-lactate dehydrogenase A chain (332 aa).

NAD(+)-binding positions include 29-57 (GAVGMACAISILMKDLADELALVDVMEDK) and Arg-99. Substrate is bound by residues Arg-106, Asn-138, and Arg-169. Position 138 (Asn-138) interacts with NAD(+). The active-site Proton acceptor is the His-193. Thr-248 serves as a coordination point for substrate.

Belongs to the LDH/MDH superfamily. LDH family. In terms of assembly, homotetramer.

The protein resides in the cytoplasm. The catalysed reaction is (S)-lactate + NAD(+) = pyruvate + NADH + H(+). It participates in fermentation; pyruvate fermentation to lactate; (S)-lactate from pyruvate: step 1/1. Interconverts simultaneously and stereospecifically pyruvate and lactate with concomitant interconversion of NADH and NAD(+). This is L-lactate dehydrogenase A chain (LDHA) from Sceloporus undulatus (Eastern fence lizard).